An 880-amino-acid polypeptide reads, in one-letter code: MQLSGFSTNGSGSLNTIVCEKLLFKPNFVQDSFIIGMTILCSVILYGSGNLRYIDALLLASGSCTQTGLQPVDLTQISIYQQLTILLFGVLSTPITVNLGLTLFKLYFYNKRYDMVITNNKLRMTYTYHTVRRRDTPEPSKVGNRKIRVLLDQGNQMHRPVAPETKAEEAEHQENEKHHRHHFRLRKFANAIDRPSFFRGNTMPALPSYAGVRNSQENEDRTEALSPALGKRRMASIDNGSLSVVQNNARNNPVDFYIPSSFEESSFQTIPEDFEPQVHDHENQTQLNHHLDNNSSISSHNPSLETANDGNQETVSSSNSNYSTTRVDNDPHVASYSPQNSNFDHQAAATTNDAHQNVVRGSAITIAPTPVPRHNRRPIYFADDTNGAEQEKGAHRLDGRGRKRGKSFAVTPTLHRNERSMSVLPFQLAKSFTSALPRRLTFNRTHTKASTMSLPYLSYNATVGRNSAFYALTPVEREELAGIEYESLRILTVILVVYFLFWHILGLVAFLIFIYTAKTSGRVVTDGGINRGWWAAFTSSSLFDNLGYSLNSDSLNSFQKAIFPQVLGTILIFLGNTFFPIMLRFIIWIMIRTTRFSPNFQQALYFLFEHPRRSFTLLFPSKTTWVLFLNLTLLNFASFFFFMVLDLGNSYVDKIPVGYRIMNAIFQNAATRSAGFTVVDLSQIAPAVMVTYMFMMYISAYPIAMSIRQTNVYEERSLGIYAADTENDDDNNINNNNNDNNTPKRKNFLMDHIQRQLSHDLWYLFLGYFIITIVEGRRLESEAEPQFTLFAILFEVISGYGTVGLSLGYKNDPSLTAQFRKISKLVMVALQIRGRHRGLPSALDRAVLMPSDKNFDREEEDYMRRHGKKNTNRADPVPSS.

Asparagine 9 carries an N-linked (GlcNAc...) asparagine glycan. 2 consecutive transmembrane segments (helical) span residues phenylalanine 28–serine 48 and threonine 84–phenylalanine 104. A disordered region spans residues methionine 157–histidine 182. The segment covering threonine 165–lysine 177 has biased composition (basic and acidic residues). N-linked (GlcNAc...) asparagine glycosylation is found at asparagine 239, asparagine 283, asparagine 293, asparagine 294, asparagine 321, asparagine 443, and asparagine 460. Over residues histidine 289 to valine 315 the composition is skewed to polar residues. Residues histidine 289–aspartate 344 are disordered. Residues serine 316 to threonine 325 are compositionally biased toward low complexity. 6 helical membrane passes run isoleucine 494 to isoleucine 514, leucine 571 to isoleucine 591, tryptophan 625 to leucine 645, isoleucine 684 to alanine 704, glutamine 756 to glycine 776, and phenylalanine 787 to leucine 807. The disordered stretch occupies residues arginine 857 to serine 880.

Belongs to the TrkH potassium transport family.

The protein localises to the cell membrane. Functionally, together with TRK1, defines the major, high-affinity potassium influx transport system. Involved in maintenance of the proper sodium/potassium ratio in the cell and in regulating the plasma membrane potential. This is Potassium transport protein 2 (trk2) from Schizosaccharomyces pombe (strain 972 / ATCC 24843) (Fission yeast).